A 427-amino-acid chain; its full sequence is MESLTLQPIARVEGTVNLPGSKSVSNRALLLAALARGTTVLTNLLDSDDVRHMLNALSALGVQYTLSADRTRCEVTGNGGPLRAAAALELFLGNAGTAMRPLAAALCLGSNDIVLTGEPRMKERPIGHLVDALRQGGAQIDYLEQENYPPLRLRGGFQGGNVEVDGSVSSQFLTALLMTAPLAPQDTVIAIKGDLVSKPYIDITLHLMKTFGVEVDNQSYQRFVVRGKQQYQSPGDYLVEGDASSASYFLAAGAIKGGTVKVTGIGRGSVQGDIRFADVLEKMGATVTWGDDFIACTRGELKAIDMDMNHIPDAAMTIATAALFAQGTTTLRNIYNWRVKETDRLFAMATELRKVGAEVEEGEDYIRITPPAKLKYAEIGTYNDHRMAMCFSLVALSDTPVTILDPKCTAKTFPDYFEQLARISTLA.

Positions 22, 23, and 27 each coordinate 3-phosphoshikimate. K22 lines the phosphoenolpyruvate pocket. Residues G96 and R124 each coordinate phosphoenolpyruvate. Positions 169, 170, 171, 197, 313, 336, and 340 each coordinate 3-phosphoshikimate. Residue Q171 participates in phosphoenolpyruvate binding. Residue D313 is the Proton acceptor of the active site. R344, R386, and K411 together coordinate phosphoenolpyruvate.

Belongs to the EPSP synthase family. In terms of assembly, monomer.

It localises to the cytoplasm. It carries out the reaction 3-phosphoshikimate + phosphoenolpyruvate = 5-O-(1-carboxyvinyl)-3-phosphoshikimate + phosphate. The protein operates within metabolic intermediate biosynthesis; chorismate biosynthesis; chorismate from D-erythrose 4-phosphate and phosphoenolpyruvate: step 6/7. Functionally, catalyzes the transfer of the enolpyruvyl moiety of phosphoenolpyruvate (PEP) to the 5-hydroxyl of shikimate-3-phosphate (S3P) to produce enolpyruvyl shikimate-3-phosphate and inorganic phosphate. In Klebsiella pneumoniae (strain 342), this protein is 3-phosphoshikimate 1-carboxyvinyltransferase.